Consider the following 227-residue polypeptide: CDP-diacylglycerol--glycerol-3-phosphate 3-phosphatidyltransferase (227 aa).

5 helical membrane passes run 30 to 50 (IFIA…GSVA), 58 to 78 (VTIH…TAVI), 112 to 132 (VLIA…VIVL), 159 to 179 (WKTT…SFSL), and 192 to 212 (WAIV…SFGI).

This sequence belongs to the CDP-alcohol phosphatidyltransferase class-I family.

The protein localises to the cell membrane. The enzyme catalyses a CDP-1,2-diacyl-sn-glycerol + sn-glycerol 3-phosphate = a 1,2-diacyl-sn-glycero-3-phospho-(1'-sn-glycero-3'-phosphate) + CMP + H(+). It participates in phospholipid metabolism; phosphatidylglycerol biosynthesis; phosphatidylglycerol from CDP-diacylglycerol: step 1/2. Functionally, this protein catalyzes the committed step to the synthesis of the acidic phospholipids. The sequence is that of CDP-diacylglycerol--glycerol-3-phosphate 3-phosphatidyltransferase (pgsA) from Mycoplasma pneumoniae (strain ATCC 29342 / M129 / Subtype 1) (Mycoplasmoides pneumoniae).